Here is a 592-residue protein sequence, read N- to C-terminus: NADH-ubiquinone oxidoreductase chain 5 (592 aa).

The next 14 helical transmembrane spans lie at 36–56 (LSMV…IYAI), 68–88 (FYII…SDNY), 89–109 (IMMF…ISFW), 132–152 (LFVI…FETM), 169–189 (MMLL…GWLL), 196–216 (TPVS…FVLV), 229–249 (LLVM…MAVV), 256–276 (VMAL…GSSA), 279–299 (LAMY…MSAG), 322–342 (LPFS…MPGL), 364–386 (YIMY…RVTY), 406–426 (STHM…LGYA), 451–471 (LPAM…LTTV), and 534–554 (ALIN…IVFF).

This sequence belongs to the complex I subunit 5 family.

Its subcellular location is the mitochondrion inner membrane. It catalyses the reaction a ubiquinone + NADH + 5 H(+)(in) = a ubiquinol + NAD(+) + 4 H(+)(out). In terms of biological role, core subunit of the mitochondrial membrane respiratory chain NADH dehydrogenase (Complex I) that is believed to belong to the minimal assembly required for catalysis. Complex I functions in the transfer of electrons from NADH to the respiratory chain. The immediate electron acceptor for the enzyme is believed to be ubiquinone. This chain is NADH-ubiquinone oxidoreductase chain 5 (ND5), found in Debaryomyces hansenii (strain ATCC 36239 / CBS 767 / BCRC 21394 / JCM 1990 / NBRC 0083 / IGC 2968) (Yeast).